The sequence spans 309 residues: MTQEERFEQRIAQETAIEPQDWMPDAYRKTLIRQIGQHAHSEIVGMLPEGNWITRAPTLRRKAILLAKVQDEAGHGLYLYSAAETLGCAREDIYQKMLDGRMKYSSIFNYPTLSWADIGVIGWLVDGAAIVNQVALCRTSYGPYARAMVKICKEESFHQRQGFEACMALAQGSEAQKQMLQDAINRFWWPALMMFGPNDDNSPNSARSLTWKIKRFTNDELRQRFVDNTVPQVEMLGMTVPDPDLHFDTESGHYRFGEIDWQEFNEVINGRGICNQERLDAKRKAWEEGTWVREAALAHAQKQHARKVA.

Substrate-binding positions include arginine 33, glutamine 37, 103-106 (KYSS), asparagine 132, methionine 193, 202-204 (SPN), lysine 214, and asparagine 218.

Forms a stable heterotetramer (dimer of heterodimers) with PaaC. The cofactor is Fe cation.

It catalyses the reaction phenylacetyl-CoA + NADPH + O2 + H(+) = 2-(1,2-epoxy-1,2-dihydrophenyl)acetyl-CoA + NADP(+) + H2O. It functions in the pathway aromatic compound metabolism; phenylacetate degradation. Functionally, component of 1,2-phenylacetyl-CoA epoxidase multicomponent enzyme system which catalyzes the reduction of phenylacetyl-CoA (PA-CoA) to form 1,2-epoxyphenylacetyl-CoA. The subunit A is the catalytic subunit involved in the incorporation of one atom of molecular oxygen into phenylacetyl-CoA. The sequence is that of 1,2-phenylacetyl-CoA epoxidase, subunit A (paaA) from Escherichia coli (strain K12).